The following is a 352-amino-acid chain: Zinc transporter 1 (352 aa).

The signal sequence occupies residues 1-29; it reads MARTMTMRVSSLLVAVVLLAALSFQACSG. Over 30–56 the chain is Extracellular; the sequence is HGGINDGDGQVDAPATPASSSGVRSKG. Residues 57-77 traverse the membrane as a helical segment; it reads LIAVKVWCLVILLVFTFAGGV. Residues 78 to 87 are Cytoplasmic-facing; the sequence is SPYFYRWNES. A helical membrane pass occupies residues 88 to 108; sequence FLLLGTQFAAGVFLGTALMHF. Residues 109 to 127 lie on the Extracellular side of the membrane; sequence LADSTSTFKGLTTNQYPFS. The helical transmembrane segment at 128–148 threads the bilayer; the sequence is FMLTCVGFLLTMLSDLVIAAV. The Cytoplasmic segment spans residues 149 to 200; sequence ARRSAAAGVSDNQVSEQQQRQQAEGAVMSRKEEEAAAVAHPAMLVRTSSFED. A helical membrane pass occupies residues 201–221; the sequence is AVLLIVALCFHSVFEGIAIGV. Residues 222-230 are Extracellular-facing; sequence SASKSEAWR. Residues 231-251 traverse the membrane as a helical segment; it reads NLWTIGLHKIFAAVAMGIALL. The Cytoplasmic portion of the chain corresponds to 252–262; sequence RMIPKRPFLMT. The helical transmembrane segment at 263-283 threads the bilayer; that stretch reads VVYSLAFAVSSPVGVGIGIAI. Residues 284-296 are Extracellular-facing; the sequence is DATSQGRAADWTY. Residues 297 to 317 form a helical membrane-spanning segment; it reads AISMGLATGVFIYVAINHLIA. Residues 318–330 lie on the Cytoplasmic side of the membrane; the sequence is KGYRPHHPTAADK. Residues 331-351 form a helical membrane-spanning segment; sequence PLFKFLAVLLGVAVMAVVMIW. Residue Asp-352 is a topological domain, extracellular.

The protein belongs to the ZIP transporter (TC 2.A.5) family. As to expression, expressed in vascular bundles of roots and leaves.

It is found in the cell membrane. Functionally, zinc transporter that may mediate zinc uptake from the rhizosphere. May also transport other divalent cations. This is Zinc transporter 1 (ZIP1) from Oryza sativa subsp. japonica (Rice).